Reading from the N-terminus, the 94-residue chain is Small ribosomal subunit protein uS19c (94 aa).

It belongs to the universal ribosomal protein uS19 family.

Its subcellular location is the plastid. The protein resides in the chloroplast. In terms of biological role, protein S19 forms a complex with S13 that binds strongly to the 16S ribosomal RNA. The protein is Small ribosomal subunit protein uS19c (rps19) of Euglena gracilis.